The chain runs to 330 residues: AH receptor-interacting protein (330 aa).

Ser-43 is subject to Phosphoserine. Residues 54–146 (RVRGKPMELI…DLDALQQNPQ (93 aa)) form the PPIase FKBP-type domain. 3 TPR repeats span residues 179-212 (VPVIHQEGNRLYREGHVKEAAAKYYDAIACLKNL), 231-264 (TPLLLNYCQCKLVAEEYYEVLDHCSSILNKYDDN), and 265-298 (VKAYFKRGKAHAAVWNAQQAQDDFAKVLQLDPAM).

As to quaternary structure, interacts with RET in the pituitary gland; this interaction prevents the formation of the AIP-survivin complex.

It localises to the cytoplasm. Functionally, may play a positive role in AHR-mediated (aromatic hydrocarbon receptor) signaling, possibly by influencing its receptivity for ligand and/or its nuclear targeting. The chain is AH receptor-interacting protein (AIP) from Bos taurus (Bovine).